A 273-amino-acid chain; its full sequence is Phosphate import ATP-binding protein PstB (273 aa).

Residues 19-258 form the ABC transporter domain; the sequence is ISIQNVTISY…FNETEKIFNS (240 aa). 51 to 58 contacts ATP; the sequence is GPSGCGKS.

The protein belongs to the ABC transporter superfamily. Phosphate importer (TC 3.A.1.7) family. As to quaternary structure, the complex is composed of two ATP-binding proteins (PstB), two transmembrane proteins (PstC and PstA) and a solute-binding protein (PstS).

The protein localises to the cell inner membrane. The enzyme catalyses phosphate(out) + ATP + H2O = ADP + 2 phosphate(in) + H(+). In terms of biological role, part of the ABC transporter complex PstSACB involved in phosphate import. Responsible for energy coupling to the transport system. The sequence is that of Phosphate import ATP-binding protein PstB from Parasynechococcus marenigrum (strain WH8102).